A 143-amino-acid chain; its full sequence is Antiholin-like protein LrgA (143 aa).

The next 4 helical transmembrane spans lie at 6–26, 30–50, 61–81, and 97–117; these read VYSF…SNII, LPIP…LLCL, LGTA…ISVI, and VIVV…QFIL.

It belongs to the CidA/LrgA family. LrgA subfamily.

It is found in the cell membrane. Inhibits the expression or activity of extracellular murein hydrolases by interacting, possibly with LrgB, with the holin-like protein CidA. The LrgAB and CidA proteins may affect the proton motive force of the membrane. May be involved in programmed cell death (PCD), possibly triggering PCD in response to antibiotics and environmental stresses. In Bacillus cereus (strain AH187), this protein is Antiholin-like protein LrgA.